Consider the following 275-residue polypeptide: NH(3)-dependent NAD(+) synthetase (275 aa).

ATP is bound at residue 46–53 (GISGGQDS). Asp-52 lines the Mg(2+) pocket. Residue Arg-140 participates in deamido-NAD(+) binding. Residue Thr-160 coordinates ATP. Glu-165 contributes to the Mg(2+) binding site. Positions 173 and 180 each coordinate deamido-NAD(+). Residues Lys-189 and Thr-211 each contribute to the ATP site. 260-261 (HK) is a deamido-NAD(+) binding site.

This sequence belongs to the NAD synthetase family. As to quaternary structure, homodimer.

It carries out the reaction deamido-NAD(+) + NH4(+) + ATP = AMP + diphosphate + NAD(+) + H(+). It participates in cofactor biosynthesis; NAD(+) biosynthesis; NAD(+) from deamido-NAD(+) (ammonia route): step 1/1. Its function is as follows. Catalyzes the ATP-dependent amidation of deamido-NAD to form NAD. Uses ammonia as a nitrogen source. In Salmonella choleraesuis (strain SC-B67), this protein is NH(3)-dependent NAD(+) synthetase.